A 426-amino-acid polypeptide reads, in one-letter code: Enolase (426 aa).

Q163 contributes to the (2R)-2-phosphoglycerate binding site. The active-site Proton donor is the E205. The Mg(2+) site is built by D242, E285, and D312. Residues K337, R366, S367, and K388 each contribute to the (2R)-2-phosphoglycerate site. Catalysis depends on K337, which acts as the Proton acceptor.

The protein belongs to the enolase family. Mg(2+) serves as cofactor.

It localises to the cytoplasm. The protein resides in the secreted. Its subcellular location is the cell surface. The catalysed reaction is (2R)-2-phosphoglycerate = phosphoenolpyruvate + H2O. It functions in the pathway carbohydrate degradation; glycolysis; pyruvate from D-glyceraldehyde 3-phosphate: step 4/5. Its function is as follows. Catalyzes the reversible conversion of 2-phosphoglycerate (2-PG) into phosphoenolpyruvate (PEP). It is essential for the degradation of carbohydrates via glycolysis. The polypeptide is Enolase (Phenylobacterium zucineum (strain HLK1)).